A 563-amino-acid chain; its full sequence is Cytochrome P450 monooxygenase efuG (563 aa).

Residues 10-30 traverse the membrane as a helical segment; that stretch reads ITSHQWGIGSVFLLISIPLIV. A disordered region spans residues 462–482; that stretch reads PDDPQSGPRKDAKKQKAKSDG. Residue cysteine 505 participates in heme binding.

It belongs to the cytochrome P450 family. Requires heme as cofactor.

It localises to the membrane. Its pathway is secondary metabolite biosynthesis; terpenoid biosynthesis. Its function is as follows. Cytochrome P450 monooxygenase; part of the gene cluster that mediates the biosynthesis of enfumafungin, a glycosylated fernene-type triterpenoid with potent antifungal activity, mediated by its interaction with beta-1,3-glucan synthase and the fungal cell wall. The pathway begins with the terpene cyclase-glycosyl transferase fusion protein that most likely uses 2,3-oxidosqualene as substrate and catalyzes glycosylation immediately after cyclization. The fernene glycoside then could be processed by the desaturase efuI which catalyzes isomerization of a double bond established by efuA to form the core structure. The latter would then undergo a series of hydroxylations in unknown order at C-2, C-19, C-23 and C-25, which would be catalyzed by two of the three cytochrome P450 monooxygenases efuB, efuG or efuH. The hydroxy-group at C-25 becomes oxidized by the dehydrogenase efuE to enable a spontaneous, non-enzymatic hemiacetal formation with C-23. After hydroxylation at C-2, acetylation by the acetyltransferase efuC takes place. The final steps in enfumafungin biosynthesis require expansion of the 5-membered ring by lactonization via a Baeyer-Villiger reaction mediated by one of the BGC's cytochrome P450 monooxygenases (efuB, efuG or efuH) followed by ring cleavage. This type of reaction would establish a double bond between C-20 and C-21 which could be reduced by the reductase efuL to form the final product. The sequence is that of Cytochrome P450 monooxygenase efuG from Hormonema carpetanum.